A 104-amino-acid chain; its full sequence is Small ribosomal subunit protein uS10 (104 aa).

The protein belongs to the universal ribosomal protein uS10 family. In terms of assembly, part of the 30S ribosomal subunit.

Its function is as follows. Involved in the binding of tRNA to the ribosomes. The chain is Small ribosomal subunit protein uS10 from Hydrogenobaculum sp. (strain Y04AAS1).